Here is a 206-residue protein sequence, read N- to C-terminus: Cytidylate kinase (206 aa).

Position 9–17 (9–17) interacts with ATP; it reads GPAAAGKGT. Over residues 155 to 168 the composition is skewed to basic and acidic residues; it reads LRERDRRDREREAA. Residues 155 to 174 form a disordered region; the sequence is LRERDRRDREREAAPLRPAP.

This sequence belongs to the cytidylate kinase family. Type 1 subfamily.

The protein resides in the cytoplasm. It carries out the reaction CMP + ATP = CDP + ADP. It catalyses the reaction dCMP + ATP = dCDP + ADP. The polypeptide is Cytidylate kinase (Cereibacter sphaeroides (strain KD131 / KCTC 12085) (Rhodobacter sphaeroides)).